The primary structure comprises 584 residues: Dihydroxyacetone kinase 1 (584 aa).

Serine 2 is subject to N-acetylserine. A phosphoserine mark is found at serine 2 and serine 5. Residues 7–353 enclose the DhaK domain; the sequence is EVTDPVNSSL…LNAFTNAPGW (347 aa). Substrate-binding positions include 51–54, lysine 103, and aspartate 108; that span reads GSGH. The active-site Tele-hemiaminal-histidine intermediate is the histidine 220. Serine 365 carries the post-translational modification Phosphoserine. The region spanning 386–582 is the DhaL domain; sequence DKFAEWMKSG…LCEFLKGVQS (197 aa). ATP contacts are provided by residues 415–418 and 459–460; these read DGDC and TS. Serine 512 is modified (phosphoserine). ATP-binding positions include 514–515 and 567–569; these read TM and DPG.

Belongs to the dihydroxyacetone kinase (DAK) family.

The catalysed reaction is dihydroxyacetone + ATP = dihydroxyacetone phosphate + ADP + H(+). The enzyme catalyses D-glyceraldehyde + ATP = D-glyceraldehyde 3-phosphate + ADP + H(+). The protein operates within polyol metabolism; glycerol fermentation; glycerone phosphate from glycerol (oxidative route): step 2/2. Its function is as follows. Catalyzes both the phosphorylation of dihydroxyacetone and of glyceraldehyde. The polypeptide is Dihydroxyacetone kinase 1 (DAK1) (Saccharomyces cerevisiae (strain ATCC 204508 / S288c) (Baker's yeast)).